The chain runs to 145 residues: Large ribosomal subunit protein bL17 (145 aa).

Belongs to the bacterial ribosomal protein bL17 family. In terms of assembly, part of the 50S ribosomal subunit. Contacts protein L32.

This is Large ribosomal subunit protein bL17 from Orientia tsutsugamushi (strain Boryong) (Rickettsia tsutsugamushi).